Reading from the N-terminus, the 146-residue chain is UPF0260 protein Sama_1927 (146 aa).

This sequence belongs to the UPF0260 family.

This chain is UPF0260 protein Sama_1927, found in Shewanella amazonensis (strain ATCC BAA-1098 / SB2B).